The sequence spans 630 residues: 1-deoxy-D-xylulose-5-phosphate synthase (630 aa).

Thiamine diphosphate is bound by residues His-87 and Gly-128–Ser-130. Residue Asp-159 participates in Mg(2+) binding. Thiamine diphosphate is bound by residues Gly-160 to Ala-161, Asn-188, Phe-295, and Glu-377. Asn-188 contributes to the Mg(2+) binding site.

It belongs to the transketolase family. DXPS subfamily. Homodimer. Mg(2+) is required as a cofactor. Thiamine diphosphate serves as cofactor.

The enzyme catalyses D-glyceraldehyde 3-phosphate + pyruvate + H(+) = 1-deoxy-D-xylulose 5-phosphate + CO2. Its pathway is metabolic intermediate biosynthesis; 1-deoxy-D-xylulose 5-phosphate biosynthesis; 1-deoxy-D-xylulose 5-phosphate from D-glyceraldehyde 3-phosphate and pyruvate: step 1/1. In terms of biological role, catalyzes the acyloin condensation reaction between C atoms 2 and 3 of pyruvate and glyceraldehyde 3-phosphate to yield 1-deoxy-D-xylulose-5-phosphate (DXP). This chain is 1-deoxy-D-xylulose-5-phosphate synthase, found in Pseudomonas savastanoi pv. phaseolicola (strain 1448A / Race 6) (Pseudomonas syringae pv. phaseolicola (strain 1448A / Race 6)).